Here is a 498-residue protein sequence, read N- to C-terminus: ATP synthase subunit beta, chloroplastic (498 aa).

172-179 is a binding site for ATP; sequence GGAGVGKT.

Belongs to the ATPase alpha/beta chains family. In terms of assembly, F-type ATPases have 2 components, CF(1) - the catalytic core - and CF(0) - the membrane proton channel. CF(1) has five subunits: alpha(3), beta(3), gamma(1), delta(1), epsilon(1). CF(0) has four main subunits: a(1), b(1), b'(1) and c(9-12).

Its subcellular location is the plastid. It localises to the chloroplast thylakoid membrane. It carries out the reaction ATP + H2O + 4 H(+)(in) = ADP + phosphate + 5 H(+)(out). Produces ATP from ADP in the presence of a proton gradient across the membrane. The catalytic sites are hosted primarily by the beta subunits. The polypeptide is ATP synthase subunit beta, chloroplastic (Elaeis oleifera (American oil palm)).